Consider the following 251-residue polypeptide: Imidazole glycerol phosphate synthase subunit HisF (251 aa).

Catalysis depends on residues Asp-11 and Asp-130.

The protein belongs to the HisA/HisF family. As to quaternary structure, heterodimer of HisH and HisF.

It is found in the cytoplasm. It catalyses the reaction 5-[(5-phospho-1-deoxy-D-ribulos-1-ylimino)methylamino]-1-(5-phospho-beta-D-ribosyl)imidazole-4-carboxamide + L-glutamine = D-erythro-1-(imidazol-4-yl)glycerol 3-phosphate + 5-amino-1-(5-phospho-beta-D-ribosyl)imidazole-4-carboxamide + L-glutamate + H(+). It functions in the pathway amino-acid biosynthesis; L-histidine biosynthesis; L-histidine from 5-phospho-alpha-D-ribose 1-diphosphate: step 5/9. In terms of biological role, IGPS catalyzes the conversion of PRFAR and glutamine to IGP, AICAR and glutamate. The HisF subunit catalyzes the cyclization activity that produces IGP and AICAR from PRFAR using the ammonia provided by the HisH subunit. The polypeptide is Imidazole glycerol phosphate synthase subunit HisF (Chlorobium phaeobacteroides (strain BS1)).